A 341-amino-acid chain; its full sequence is Ketol-acid reductoisomerase (NADP(+)) (341 aa).

The 180-residue stretch at 2–181 (VKVYYNGDAN…GSARAGVIET (180 aa)) folds into the KARI N-terminal Rossmann domain. NADP(+) contacts are provided by residues 25 to 28 (YGSQ), R48, S52, and 82 to 85 (DEHQ). H107 is a catalytic residue. G133 serves as a coordination point for NADP(+). Positions 182–327 (TFKEETETDL…RELRKMMPFV (146 aa)) constitute a KARI C-terminal knotted domain. The Mg(2+) site is built by D190, E194, E226, and E230. A substrate-binding site is contributed by S251.

The protein belongs to the ketol-acid reductoisomerase family. It depends on Mg(2+) as a cofactor.

It catalyses the reaction (2R)-2,3-dihydroxy-3-methylbutanoate + NADP(+) = (2S)-2-acetolactate + NADPH + H(+). The catalysed reaction is (2R,3R)-2,3-dihydroxy-3-methylpentanoate + NADP(+) = (S)-2-ethyl-2-hydroxy-3-oxobutanoate + NADPH + H(+). Its pathway is amino-acid biosynthesis; L-isoleucine biosynthesis; L-isoleucine from 2-oxobutanoate: step 2/4. The protein operates within amino-acid biosynthesis; L-valine biosynthesis; L-valine from pyruvate: step 2/4. Its function is as follows. Involved in the biosynthesis of branched-chain amino acids (BCAA). Catalyzes an alkyl-migration followed by a ketol-acid reduction of (S)-2-acetolactate (S2AL) to yield (R)-2,3-dihydroxy-isovalerate. In the isomerase reaction, S2AL is rearranged via a Mg-dependent methyl migration to produce 3-hydroxy-3-methyl-2-ketobutyrate (HMKB). In the reductase reaction, this 2-ketoacid undergoes a metal-dependent reduction by NADPH to yield (R)-2,3-dihydroxy-isovalerate. In Anoxybacillus flavithermus (strain DSM 21510 / WK1), this protein is Ketol-acid reductoisomerase (NADP(+)).